Here is an 88-residue protein sequence, read N- to C-terminus: Fe-S protein maturation auxiliary factor SufT (88 aa).

The protein belongs to the MIP18 family.

In terms of biological role, involved in the maturation of iron-sulfur (Fe-S) proteins. May function as a Fe-S cluster carrier. Is required for S.aureus growth under conditions that impose a high demand for lipoic acid, likely via a role in the maturation of the lipoate synthase LipA. Is non-essential for growth in conditions that impose a low demand for lipoic acid or Fe-S clusters, such as fermentative growth. Also seems to be involved in the maturation of AcnA, LeuCD and IlvD proteins, that utilize Fe-S cluster cofactors, and its role increases under conditions of high-demand for Fe-S clusters (respiratory growth). Is not involved in the repair of Fe-S clusters damaged by reactive oxygen species or in the physical protection of Fe-S clusters from oxidants. Displays synergy with the Fe-S cluster carrier Nfu. This is Fe-S protein maturation auxiliary factor SufT from Staphylococcus aureus (strain USA300).